The primary structure comprises 164 residues: Peptidyl-prolyl cis-trans isomerase A-like 4C (164 aa).

The region spanning 7 to 163 (FFDITVDGKP…KKITIADCGQ (157 aa)) is the PPIase cyclophilin-type domain.

The protein belongs to the cyclophilin-type PPIase family. PPIase A subfamily.

The protein localises to the cytoplasm. The enzyme catalyses [protein]-peptidylproline (omega=180) = [protein]-peptidylproline (omega=0). In terms of biological role, PPIases accelerate the folding of proteins. It catalyzes the cis-trans isomerization of proline imidic peptide bonds in oligopeptides. The sequence is that of Peptidyl-prolyl cis-trans isomerase A-like 4C from Homo sapiens (Human).